The following is a 437-amino-acid chain: Protein translocase subunit SecY (437 aa).

Helical transmembrane passes span 19-39 (LFTL…IPGV), 69-89 (LLQI…SIIL), 122-142 (VALA…GALF), 157-177 (IFTT…VMWL), 189-209 (GMSI…LWAI), 219-239 (WIEF…VVFV), 275-295 (GVIP…IVQF), 318-338 (HIIL…AISF), 378-398 (GSLY…GFGA), and 400-420 (QNFP…LETV).

This sequence belongs to the SecY/SEC61-alpha family. In terms of assembly, component of the Sec protein translocase complex. Heterotrimer consisting of SecY, SecE and SecG subunits. The heterotrimers can form oligomers, although 1 heterotrimer is thought to be able to translocate proteins. Interacts with the ribosome. Interacts with SecDF, and other proteins may be involved. Interacts with SecA.

It localises to the cell membrane. Functionally, the central subunit of the protein translocation channel SecYEG. Consists of two halves formed by TMs 1-5 and 6-10. These two domains form a lateral gate at the front which open onto the bilayer between TMs 2 and 7, and are clamped together by SecE at the back. The channel is closed by both a pore ring composed of hydrophobic SecY resides and a short helix (helix 2A) on the extracellular side of the membrane which forms a plug. The plug probably moves laterally to allow the channel to open. The ring and the pore may move independently. The sequence is that of Protein translocase subunit SecY from Streptomyces coelicolor (strain ATCC BAA-471 / A3(2) / M145).